The primary structure comprises 511 residues: Ent-copalyl diphosphate synthase (511 aa).

Positions 291 and 293 each coordinate a divalent metal cation. The DXDD motif motif lies at 291-294 (DSDD).

Belongs to the terpene synthase family. As to quaternary structure, homodimer. A divalent metal cation is required as a cofactor.

The catalysed reaction is (2E,6E,10E)-geranylgeranyl diphosphate = ent-copalyl diphosphate. It participates in antibiotic biosynthesis. Involved in viguiepinol biosynthesis. Catalyzes the conversion of geranylgeranyl diphosphate (GGDP) into copalyl diphosphate (ent-CDP). The sequence is that of Ent-copalyl diphosphate synthase from Streptomyces sp. (strain KO-3988).